Reading from the N-terminus, the 307-residue chain is Oxygen-dependent coproporphyrinogen-III oxidase (307 aa).

Ser99 is a substrate binding site. The a divalent metal cation site is built by His103 and His113. Residue His113 is the Proton donor of the active site. Residue 115-117 (NVR) coordinates substrate. A divalent metal cation-binding residues include His152 and His182. Positions 247–282 (YVEFNLVFDRGTLFGLQSGGRTESILMSMPPVANWR) are important for dimerization. 265–267 (GGR) contributes to the substrate binding site.

The protein belongs to the aerobic coproporphyrinogen-III oxidase family. In terms of assembly, homodimer. A divalent metal cation serves as cofactor.

It localises to the cytoplasm. It catalyses the reaction coproporphyrinogen III + O2 + 2 H(+) = protoporphyrinogen IX + 2 CO2 + 2 H2O. It participates in porphyrin-containing compound metabolism; protoporphyrin-IX biosynthesis; protoporphyrinogen-IX from coproporphyrinogen-III (O2 route): step 1/1. Involved in the heme biosynthesis. Catalyzes the aerobic oxidative decarboxylation of propionate groups of rings A and B of coproporphyrinogen-III to yield the vinyl groups in protoporphyrinogen-IX. This Burkholderia multivorans (strain ATCC 17616 / 249) protein is Oxygen-dependent coproporphyrinogen-III oxidase.